A 245-amino-acid polypeptide reads, in one-letter code: 1-(5-phosphoribosyl)-5-[(5-phosphoribosylamino)methylideneamino] imidazole-4-carboxamide isomerase (245 aa).

Asp-7 (proton acceptor) is an active-site residue. The Proton donor role is filled by Asp-129.

This sequence belongs to the HisA/HisF family.

Its subcellular location is the cytoplasm. The enzyme catalyses 1-(5-phospho-beta-D-ribosyl)-5-[(5-phospho-beta-D-ribosylamino)methylideneamino]imidazole-4-carboxamide = 5-[(5-phospho-1-deoxy-D-ribulos-1-ylimino)methylamino]-1-(5-phospho-beta-D-ribosyl)imidazole-4-carboxamide. It functions in the pathway amino-acid biosynthesis; L-histidine biosynthesis; L-histidine from 5-phospho-alpha-D-ribose 1-diphosphate: step 4/9. The chain is 1-(5-phosphoribosyl)-5-[(5-phosphoribosylamino)methylideneamino] imidazole-4-carboxamide isomerase from Salmonella arizonae (strain ATCC BAA-731 / CDC346-86 / RSK2980).